The chain runs to 278 residues: NAD-capped RNA hydrolase NudC (278 aa).

Residue Arg-84 participates in substrate binding. Cys-114 and Cys-117 together coordinate Zn(2+). Glu-127 is a substrate binding site. Zn(2+) is bound by residues Cys-132 and Cys-135. Residue Tyr-140 coordinates substrate. Residues 141–265 (PRLSPSMIVL…IARHLIDLYL (125 aa)) form the Nudix hydrolase domain. Ala-174, Glu-190, and Glu-194 together coordinate a divalent metal cation. Positions 175–196 (GFVEAGESVEQCVVREVREEVG) match the Nudix box motif. 208-215 (QNWPFPHS) lines the substrate pocket. A divalent metal cation is bound at residue Glu-235. Ala-257 provides a ligand contact to substrate.

Belongs to the Nudix hydrolase family. NudC subfamily. As to quaternary structure, homodimer. Mg(2+) serves as cofactor. Requires Mn(2+) as cofactor. Zn(2+) is required as a cofactor.

It carries out the reaction a 5'-end NAD(+)-phospho-ribonucleoside in mRNA + H2O = a 5'-end phospho-adenosine-phospho-ribonucleoside in mRNA + beta-nicotinamide D-ribonucleotide + 2 H(+). The enzyme catalyses NAD(+) + H2O = beta-nicotinamide D-ribonucleotide + AMP + 2 H(+). It catalyses the reaction NADH + H2O = reduced beta-nicotinamide D-ribonucleotide + AMP + 2 H(+). Functionally, mRNA decapping enzyme that specifically removes the nicotinamide adenine dinucleotide (NAD) cap from a subset of mRNAs by hydrolyzing the diphosphate linkage to produce nicotinamide mononucleotide (NMN) and 5' monophosphate mRNA. The NAD-cap is present at the 5'-end of some mRNAs and stabilizes RNA against 5'-processing. Has preference for mRNAs with a 5'-end purine. Catalyzes the hydrolysis of a broad range of dinucleotide pyrophosphates. The chain is NAD-capped RNA hydrolase NudC from Pseudomonas aeruginosa (strain LESB58).